Reading from the N-terminus, the 238-residue chain is LRRN4 C-terminal-like protein (238 aa).

Residues 1-22 (MLGSPCLLWLLAVTFLVPRAQP) form the signal peptide. Over 23 to 194 (LAPQDFEEEE…RLAVPPNPRT (172 aa)) the chain is Extracellular. Positions 82–176 (PPDPPRMGEV…AGGEGLEGAD (95 aa)) constitute a Fibronectin type-III domain. Asn132 carries an N-linked (GlcNAc...) asparagine glycan. A helical transmembrane segment spans residues 195–215 (LVHAAVGVGTALALLSCAALV). The Cytoplasmic segment spans residues 216–238 (WHFCLRDRWGCPRRAAARAAGAL).

Its subcellular location is the membrane. The polypeptide is LRRN4 C-terminal-like protein (LRRN4CL) (Homo sapiens (Human)).